The primary structure comprises 374 residues: Isocitrate dehydrogenase [NAD] catalytic subunit 6, mitochondrial (374 aa).

Residues 1–44 constitute a mitochondrion transit peptide; the sequence is MTMTAFLARRLIGNGSSQILGTSSSSSGPFISVSRAFFSSSTPI. 4 residues coordinate substrate: arginine 127, arginine 137, arginine 158, and aspartate 245. Aspartate 245, aspartate 269, and aspartate 273 together coordinate Mg(2+).

Belongs to the isocitrate and isopropylmalate dehydrogenases family. Heterooligomer of catalytic and regulatory subunits. The cofactor is Mg(2+). Requires Mn(2+) as cofactor. Ubiquitous. Predominantly expressed in leaves.

It is found in the mitochondrion. It catalyses the reaction D-threo-isocitrate + NAD(+) = 2-oxoglutarate + CO2 + NADH. Functionally, catalytic subunit of the NAD(+)-dependent isocitrate dehydrogenase involved in the oxidative decarboxylation of isocitrate to 2-oxoglutarate. Performs an essential role in the oxidative function of the citric acid cycle. The protein is Isocitrate dehydrogenase [NAD] catalytic subunit 6, mitochondrial (IDH6) of Arabidopsis thaliana (Mouse-ear cress).